We begin with the raw amino-acid sequence, 235 residues long: Large ribosomal subunit protein uL1 (235 aa).

Belongs to the universal ribosomal protein uL1 family. Part of the 50S ribosomal subunit.

Binds directly to 23S rRNA. The L1 stalk is quite mobile in the ribosome, and is involved in E site tRNA release. Functionally, protein L1 is also a translational repressor protein, it controls the translation of the L11 operon by binding to its mRNA. The chain is Large ribosomal subunit protein uL1 from Fusobacterium nucleatum subsp. nucleatum (strain ATCC 25586 / DSM 15643 / BCRC 10681 / CIP 101130 / JCM 8532 / KCTC 2640 / LMG 13131 / VPI 4355).